A 147-amino-acid polypeptide reads, in one-letter code: MGFIFSKSMNENMKNQQEFMVMHARLQLERQLIMQNEMRERQMAMQIAWSREFLKYFGTFFGIATISLAAGAIKRKKPAFLIPIVPLSFIFTYQYDLGYGTLLQRMKSEAEDILETEKTKLELPKGLITFESLEKARREQSKFFSDK.

Residues 1 to 52 (MGFIFSKSMNENMKNQQEFMVMHARLQLERQLIMQNEMRERQMAMQIAWSRE) are Extracellular-facing. A helical membrane pass occupies residues 53 to 73 (FLKYFGTFFGIATISLAAGAI). At 74–78 (KRKKP) the chain is on the cytoplasmic side. Residues 79-99 (AFLIPIVPLSFIFTYQYDLGY) form a helical membrane-spanning segment. Residues 100 to 147 (GTLLQRMKSEAEDILETEKTKLELPKGLITFESLEKARREQSKFFSDK) lie on the Extracellular side of the membrane.

Interacts with PLAT. Interacts with PLAUR. Expressed in adrenal medulla (pheochromocytoma).

Its subcellular location is the cell membrane. Its function is as follows. Receptor for plasminogen. Regulates urokinase plasminogen activator-dependent and stimulates tissue-type plasminogen activator-dependent cell surface plasminogen activation. Proposed to be part of a local catecholaminergic cell plasminogen activation system that regulates neuroendocrine prohormone processing. Involved in regulation of inflammatory response; regulates monocyte chemotactic migration and matrix metalloproteinase activation, such as of MMP2 and MMP9. In Rattus norvegicus (Rat), this protein is Plasminogen receptor (KT) (Plgrkt).